The primary structure comprises 442 residues: Exodeoxyribonuclease 7 large subunit (442 aa).

This sequence belongs to the XseA family. As to quaternary structure, heterooligomer composed of large and small subunits.

The protein resides in the cytoplasm. It carries out the reaction Exonucleolytic cleavage in either 5'- to 3'- or 3'- to 5'-direction to yield nucleoside 5'-phosphates.. Bidirectionally degrades single-stranded DNA into large acid-insoluble oligonucleotides, which are then degraded further into small acid-soluble oligonucleotides. This Shewanella woodyi (strain ATCC 51908 / MS32) protein is Exodeoxyribonuclease 7 large subunit.